A 163-amino-acid polypeptide reads, in one-letter code: Phosphopantetheine adenylyltransferase (163 aa).

Serine 8 is a binding site for substrate. Residues 8 to 9 (SF) and histidine 16 each bind ATP. Positions 40, 72, and 86 each coordinate substrate. ATP-binding positions include 87 to 89 (GLR), glutamate 97, and 122 to 128 (HSFLSSS).

It belongs to the bacterial CoaD family. Homohexamer. Requires Mg(2+) as cofactor.

The protein resides in the cytoplasm. The enzyme catalyses (R)-4'-phosphopantetheine + ATP + H(+) = 3'-dephospho-CoA + diphosphate. The protein operates within cofactor biosynthesis; coenzyme A biosynthesis; CoA from (R)-pantothenate: step 4/5. Its function is as follows. Reversibly transfers an adenylyl group from ATP to 4'-phosphopantetheine, yielding dephospho-CoA (dPCoA) and pyrophosphate. The protein is Phosphopantetheine adenylyltransferase of Synechococcus sp. (strain CC9902).